The chain runs to 488 residues: Glutamyl-tRNA(Gln) amidotransferase subunit A (488 aa).

Catalysis depends on charge relay system residues Lys-77 and Ser-152. Ser-176 (acyl-ester intermediate) is an active-site residue.

This sequence belongs to the amidase family. GatA subfamily. Heterotrimer of A, B and C subunits.

It catalyses the reaction L-glutamyl-tRNA(Gln) + L-glutamine + ATP + H2O = L-glutaminyl-tRNA(Gln) + L-glutamate + ADP + phosphate + H(+). Its function is as follows. Allows the formation of correctly charged Gln-tRNA(Gln) through the transamidation of misacylated Glu-tRNA(Gln) in organisms which lack glutaminyl-tRNA synthetase. The reaction takes place in the presence of glutamine and ATP through an activated gamma-phospho-Glu-tRNA(Gln). This is Glutamyl-tRNA(Gln) amidotransferase subunit A from Streptococcus pyogenes serotype M5 (strain Manfredo).